Here is a 126-residue protein sequence, read N- to C-terminus: LWamide neuropeptides (126 aa).

The propeptide at 1–2 (KR) is 1. The segment at 1–126 (KRQQPGLWGR…KSAIPKAKPQ (126 aa)) is disordered. A Tryptophan amide modification is found at tryptophan 8. Positions 11–15 (SADPQ) are cleaved as a propeptide — 2. A tryptophan amide mark is found at tryptophan 20 and tryptophan 29. A propeptide spans 32 to 36 (SADPQ) (2). A tryptophan amide mark is found at tryptophan 41 and tryptophan 50. A propeptide spans 53–57 (SADPQ) (2). A tryptophan amide mark is found at tryptophan 62 and tryptophan 71. A propeptide spans 74-78 (SADPQ) (2). Position 83 is a tryptophan amide (tryptophan 83). A propeptide spans 86-93 (SAGSGKRQ) (3). Tryptophan 99 carries the tryptophan amide modification. The propeptide at 102–126 (SAEPPQYKELEDLKQKSAIPKAKPQ) is 4. Residues 107–116 (QYKELEDLKQ) show a composition bias toward basic and acidic residues.

Belongs to the LWamide neuropeptide family.

The protein localises to the secreted. In terms of biological role, metamorphosin A may be part of an internal signaling system involved in control of metamorphosis. In Anemonia sulcata (Mediterranean snakelocks sea anemone), this protein is LWamide neuropeptides.